The primary structure comprises 172 residues: Ribosome maturation factor RimM (172 aa).

Residues 96–169 form the PRC barrel domain; that stretch reads PDEFYDHQLE…AIEIDPPEGL (74 aa).

The protein belongs to the RimM family. In terms of assembly, binds ribosomal protein uS19.

It is found in the cytoplasm. Functionally, an accessory protein needed during the final step in the assembly of 30S ribosomal subunit, possibly for assembly of the head region. Essential for efficient processing of 16S rRNA. May be needed both before and after RbfA during the maturation of 16S rRNA. It has affinity for free ribosomal 30S subunits but not for 70S ribosomes. The polypeptide is Ribosome maturation factor RimM (Mycolicibacterium vanbaalenii (strain DSM 7251 / JCM 13017 / BCRC 16820 / KCTC 9966 / NRRL B-24157 / PYR-1) (Mycobacterium vanbaalenii)).